The chain runs to 244 residues: 5-oxoprolinase subunit A (244 aa).

This sequence belongs to the LamB/PxpA family. As to quaternary structure, forms a complex composed of PxpA, PxpB and PxpC.

It carries out the reaction 5-oxo-L-proline + ATP + 2 H2O = L-glutamate + ADP + phosphate + H(+). Catalyzes the cleavage of 5-oxoproline to form L-glutamate coupled to the hydrolysis of ATP to ADP and inorganic phosphate. In Shigella flexneri, this protein is 5-oxoprolinase subunit A.